We begin with the raw amino-acid sequence, 130 residues long: Phosphoribosyl-AMP cyclohydrolase (130 aa).

Aspartate 77 contacts Mg(2+). Residue cysteine 78 participates in Zn(2+) binding. Residues aspartate 79 and aspartate 81 each contribute to the Mg(2+) site. Residues cysteine 95 and cysteine 102 each contribute to the Zn(2+) site.

It belongs to the PRA-CH family. Homodimer. Mg(2+) is required as a cofactor. It depends on Zn(2+) as a cofactor.

The protein localises to the cytoplasm. It carries out the reaction 1-(5-phospho-beta-D-ribosyl)-5'-AMP + H2O = 1-(5-phospho-beta-D-ribosyl)-5-[(5-phospho-beta-D-ribosylamino)methylideneamino]imidazole-4-carboxamide. It participates in amino-acid biosynthesis; L-histidine biosynthesis; L-histidine from 5-phospho-alpha-D-ribose 1-diphosphate: step 3/9. Its function is as follows. Catalyzes the hydrolysis of the adenine ring of phosphoribosyl-AMP. In Pseudomonas syringae pv. tomato (strain ATCC BAA-871 / DC3000), this protein is Phosphoribosyl-AMP cyclohydrolase.